The sequence spans 238 residues: MEQQQERPREVYRECMRNHAAKLGTYANDGCCEYTPDDGHPAGLLCAACGCHRNFHRKDFLDGRATAAAGGAGGAGVGVAPMLPAPGGGGPPGYMHMAAMGGAVGGGGGVDGGGGSGGRRRTRTKFTEEQKARMLRFAERLGWRMPKREPGRAPGDDEVARFCREIGVNRQVFKVWMHNHKAGGGGGGGGSGGPGAGGGAQTSSSTTRGGGDVGVGLSPAMGGDGEDDEEVRGSEMCM.

The segment at 12-59 adopts a ZF-HD dimerization-type; degenerate zinc-finger fold; sequence YRECMRNHAAKLGTYANDGCCEYTPDDGHPAGLLCAACGCHRNFHRKD. Positions 119 to 188 form a DNA-binding region, homeobox; that stretch reads RRRTRTKFTE…NHKAGGGGGG (70 aa). Residues 183–200 show a composition bias toward gly residues; the sequence is GGGGGGGGSGGPGAGGGA. Positions 183 to 238 are disordered; the sequence is GGGGGGGGSGGPGAGGGAQTSSSTTRGGGDVGVGLSPAMGGDGEDDEEVRGSEMCM.

Homo- and heterodimer with other ZFHD proteins.

It is found in the nucleus. Putative transcription factor. This is Zinc-finger homeodomain protein 11 (ZHD11) from Oryza sativa subsp. indica (Rice).